We begin with the raw amino-acid sequence, 352 residues long: Biotin synthase (352 aa).

Positions 44-262 constitute a Radical SAM core domain; it reads NRVQVSTLLS…LAVARIMMPK (219 aa). Cys59, Cys63, and Cys66 together coordinate [4Fe-4S] cluster. Residues Cys103, Cys134, Cys194, and Arg266 each coordinate [2Fe-2S] cluster.

Belongs to the radical SAM superfamily. Biotin synthase family. As to quaternary structure, homodimer. Requires [4Fe-4S] cluster as cofactor. The cofactor is [2Fe-2S] cluster.

The catalysed reaction is (4R,5S)-dethiobiotin + (sulfur carrier)-SH + 2 reduced [2Fe-2S]-[ferredoxin] + 2 S-adenosyl-L-methionine = (sulfur carrier)-H + biotin + 2 5'-deoxyadenosine + 2 L-methionine + 2 oxidized [2Fe-2S]-[ferredoxin]. Its pathway is cofactor biosynthesis; biotin biosynthesis; biotin from 7,8-diaminononanoate: step 2/2. Catalyzes the conversion of dethiobiotin (DTB) to biotin by the insertion of a sulfur atom into dethiobiotin via a radical-based mechanism. The sequence is that of Biotin synthase from Pseudomonas paraeruginosa (strain DSM 24068 / PA7) (Pseudomonas aeruginosa (strain PA7)).